The sequence spans 255 residues: Hydroxyacylglutathione hydrolase (255 aa).

Residues histidine 56, histidine 58, aspartate 60, histidine 61, histidine 114, aspartate 133, and histidine 171 each contribute to the Zn(2+) site.

Belongs to the metallo-beta-lactamase superfamily. Glyoxalase II family. Monomer. Zn(2+) is required as a cofactor.

It carries out the reaction an S-(2-hydroxyacyl)glutathione + H2O = a 2-hydroxy carboxylate + glutathione + H(+). The protein operates within secondary metabolite metabolism; methylglyoxal degradation; (R)-lactate from methylglyoxal: step 2/2. Its function is as follows. Thiolesterase that catalyzes the hydrolysis of S-D-lactoyl-glutathione to form glutathione and D-lactic acid. This chain is Hydroxyacylglutathione hydrolase, found in Chelativorans sp. (strain BNC1).